A 201-amino-acid polypeptide reads, in one-letter code: Small ribosomal subunit protein uS5 (201 aa).

Residues 1–28 (MAGPQRRGSGAGGGERRDRKGRDGGASA) form a disordered region. Residues 14 to 23 (GERRDRKGRD) are compositionally biased toward basic and acidic residues. Residues 34–97 (YVERVVAINR…EEAKKNFFKV (64 aa)) enclose the S5 DRBM domain.

This sequence belongs to the universal ribosomal protein uS5 family. As to quaternary structure, part of the 30S ribosomal subunit. Contacts proteins S4 and S8.

With S4 and S12 plays an important role in translational accuracy. Its function is as follows. Located at the back of the 30S subunit body where it stabilizes the conformation of the head with respect to the body. This Streptomyces griseus subsp. griseus (strain JCM 4626 / CBS 651.72 / NBRC 13350 / KCC S-0626 / ISP 5235) protein is Small ribosomal subunit protein uS5.